A 705-amino-acid chain; its full sequence is Pentatricopeptide repeat-containing protein At1g09410, mitochondrial (705 aa).

The N-terminal 11 residues, 1–11 (MKSQILLRRTY), are a transit peptide targeting the mitochondrion. PPR repeat units lie at residues 16-46 (PPPTANVRITHLSRIGKIHEARKLFDSCDSK), 47-77 (SISSWNSMVAGYFANLMPRDARKLFDEMPDR), 78-112 (NIISWNGLVSGYMKNGEIDEARKVFDLMPERNVVS), 113-139 (WTALVKGYVHNGKVDVAESLFWKMPEK), 140-170 (NKVSWTVMLIGFLQDGRIDDACKLYEMIPDK), 171-205 (DNIARTSMIHGLCKEGRVDEAREIFDEMSERSVIT), 206-232 (WTTMVTGYGQNNRVDDARKIFDVMPEK), 233-267 (TEVSWTSMLMGYVQNGRIEDAEELFEVMPVKPVIA), 268-294 (CNAMISGLGQKGEIAKARRVFDSMKER), 295-329 (NDASWQTVIKIHERNGFELEALDLFILMQKQGVRP), 330-364 (TFPTLISILSVCASLASLHHGKQVHAQLVRCQFDV), 365-395 (DVYVASVLMTMYIKCGELVKSKLIFDRFPSK), 396-430 (DIIMWNSIISGYASHGLGEEALKVFCEMPLSGSTK), 432-462 (NEVTFVATLSACSYAGMVEEGLKIYESMESV), and 468-498 (ITAHYACMVDMLGRAGRFNEAMEMIDSMTVE). Residues 503–578 (VWGSLLGACR…SPGCSWTEVE (76 aa)) are type E motif. Positions 579 to 610 (NKVHAFTRGGINSHPEQESILKILDELDGLLR) are type E(+) motif. The type DYW motif stretch occupies residues 611 to 705 (EAGYNPDCSY…NGECSCKDYW (95 aa)).

The protein belongs to the PPR family. PCMP-H subfamily.

The protein localises to the mitochondrion. In Arabidopsis thaliana (Mouse-ear cress), this protein is Pentatricopeptide repeat-containing protein At1g09410, mitochondrial (PCMP-H18).